Consider the following 859-residue polypeptide: Heat shock protein 105 kDa (859 aa).

Residue S2 is modified to N-acetylserine. Position 471 is an N6-acetyllysine (K471). 2 positions are modified to phosphoserine: S509 and S510. Disordered regions lie at residues 515-585 (MDCQ…PPEA) and 797-859 (CEPV…MDLD). The segment covering 533–555 (QQDNNEAGTQPQVQTDGHQTSQS) has biased composition (polar residues). Phosphoserine is present on S558. T562 carries the phosphothreonine modification. Basic and acidic residues-rich tracts occupy residues 564–585 (EENK…PPEA) and 806–815 (PKIESPKLER). S810 carries the phosphoserine modification. T816 bears the Phosphothreonine mark. Positions 822 to 831 (TDKKEEDLDG) are enriched in basic and acidic residues. Residues 850-859 (EKSSINMDLD) show a composition bias toward polar residues.

Belongs to the heat shock protein 70 family. Interacts with HSPA8/HSC70. Interacts with HSPA1A (via NBD) and HSPA1B (via NBD). Phosphorylation on Ser-509 may be important for regulation of the HSPA8/HSC70 chaperone activity.

It localises to the cytoplasm. In terms of biological role, acts as a nucleotide-exchange factor (NEF) for chaperone proteins HSPA1A and HSPA1B, promoting the release of ADP from HSPA1A/B thereby triggering substrate release. Prevents the aggregation of denatured proteins in cells under severe stress, on which the ATP levels decrease markedly. Inhibits HSPA8/HSC70 ATPase and chaperone activities. In Bos taurus (Bovine), this protein is Heat shock protein 105 kDa (HSPH1).